The following is a 309-amino-acid chain: Succinate--CoA ligase [ADP-forming] subunit alpha-2, mitochondrial (309 aa).

A hydrogenosome-targeting transit peptide spans 1–9; it reads MLSSSFERN. CoA contacts are provided by residues lysine 54 and 107 to 109; that span reads ITE. Tyrosine 171 lines the substrate pocket. Histidine 262 functions as the Tele-phosphohistidine intermediate in the catalytic mechanism.

Belongs to the succinate/malate CoA ligase alpha subunit family. Heterodimer of an alpha and a beta subunit.

It localises to the hydrogenosome lumen. The catalysed reaction is succinate + ATP + CoA = succinyl-CoA + ADP + phosphate. It functions in the pathway carbohydrate metabolism; tricarboxylic acid cycle; succinate from succinyl-CoA (ligase route): step 1/1. Succinyl-CoA synthetase functions in the citric acid cycle (TCA), coupling the hydrolysis of succinyl-CoA to the synthesis of ATP and thus represents the only step of substrate-level phosphorylation in the TCA. The alpha subunit of the enzyme binds the substrates coenzyme A and phosphate, while succinate binding and nucleotide specificity is provided by the beta subunit. The protein is Succinate--CoA ligase [ADP-forming] subunit alpha-2, mitochondrial (ALPHA-SCS2) of Trichomonas vaginalis.